We begin with the raw amino-acid sequence, 279 residues long: Thymidylate synthase (279 aa).

132–133 (RR) lines the dUMP pocket. Cys153 acts as the Nucleophile in catalysis. DUMP contacts are provided by residues 178 to 181 (RSND), Asn189, and 219 to 221 (HIY). Asp181 serves as a coordination point for (6R)-5,10-methylene-5,6,7,8-tetrahydrofolate. Ala278 contacts (6R)-5,10-methylene-5,6,7,8-tetrahydrofolate.

Belongs to the thymidylate synthase family. Bacterial-type ThyA subfamily. In terms of assembly, homodimer.

Its subcellular location is the cytoplasm. It carries out the reaction dUMP + (6R)-5,10-methylene-5,6,7,8-tetrahydrofolate = 7,8-dihydrofolate + dTMP. It participates in pyrimidine metabolism; dTTP biosynthesis. Catalyzes the reductive methylation of 2'-deoxyuridine-5'-monophosphate (dUMP) to 2'-deoxythymidine-5'-monophosphate (dTMP) while utilizing 5,10-methylenetetrahydrofolate (mTHF) as the methyl donor and reductant in the reaction, yielding dihydrofolate (DHF) as a by-product. This enzymatic reaction provides an intracellular de novo source of dTMP, an essential precursor for DNA biosynthesis. The chain is Thymidylate synthase from Lactococcus lactis subsp. lactis (strain IL1403) (Streptococcus lactis).